We begin with the raw amino-acid sequence, 140 residues long: Organic hydroperoxide resistance protein-like (140 aa).

It belongs to the OsmC/Ohr family.

This is Organic hydroperoxide resistance protein-like from Staphylococcus aureus (strain USA300).